The chain runs to 140 residues: Small ribosomal subunit protein uS12m (140 aa).

It belongs to the universal ribosomal protein uS12 family.

The protein resides in the mitochondrion. This is Small ribosomal subunit protein uS12m (mrps12) from Dictyostelium discoideum (Social amoeba).